A 273-amino-acid chain; its full sequence is Glutamate racemase (273 aa).

Substrate contacts are provided by residues 10 to 11 (DS) and 42 to 43 (YG). The Proton donor/acceptor role is filled by cysteine 73. 74–75 (NT) provides a ligand contact to substrate. The active-site Proton donor/acceptor is cysteine 184. 185 to 186 (TH) is a substrate binding site.

It belongs to the aspartate/glutamate racemases family.

The enzyme catalyses L-glutamate = D-glutamate. The protein operates within cell wall biogenesis; peptidoglycan biosynthesis. Provides the (R)-glutamate required for cell wall biosynthesis. This is Glutamate racemase from Desulforudis audaxviator (strain MP104C).